The following is a 427-amino-acid chain: 3-phosphoshikimate 1-carboxyvinyltransferase (427 aa).

3 residues coordinate 3-phosphoshikimate: lysine 20, serine 21, and arginine 25. Lysine 20 provides a ligand contact to phosphoenolpyruvate. Residues glycine 92 and arginine 120 each contribute to the phosphoenolpyruvate site. 4 residues coordinate 3-phosphoshikimate: serine 166, glutamine 168, aspartate 312, and lysine 339. Glutamine 168 is a phosphoenolpyruvate binding site. Aspartate 312 acts as the Proton acceptor in catalysis. Positions 343 and 385 each coordinate phosphoenolpyruvate.

This sequence belongs to the EPSP synthase family. As to quaternary structure, monomer.

Its subcellular location is the cytoplasm. The catalysed reaction is 3-phosphoshikimate + phosphoenolpyruvate = 5-O-(1-carboxyvinyl)-3-phosphoshikimate + phosphate. Its pathway is metabolic intermediate biosynthesis; chorismate biosynthesis; chorismate from D-erythrose 4-phosphate and phosphoenolpyruvate: step 6/7. Catalyzes the transfer of the enolpyruvyl moiety of phosphoenolpyruvate (PEP) to the 5-hydroxyl of shikimate-3-phosphate (S3P) to produce enolpyruvyl shikimate-3-phosphate and inorganic phosphate. The polypeptide is 3-phosphoshikimate 1-carboxyvinyltransferase (Streptococcus pyogenes serotype M49 (strain NZ131)).